A 521-amino-acid chain; its full sequence is Cytochrome P450 1A1 (521 aa).

Residue phenylalanine 229 participates in substrate binding. Cysteine 463 contacts heme.

This sequence belongs to the cytochrome P450 family. The cofactor is heme.

It is found in the endoplasmic reticulum membrane. The protein localises to the microsome membrane. The catalysed reaction is an organic molecule + reduced [NADPH--hemoprotein reductase] + O2 = an alcohol + oxidized [NADPH--hemoprotein reductase] + H2O + H(+). Functionally, cytochromes P450 are a group of heme-thiolate monooxygenases. They oxidize a variety of structurally unrelated compounds, including steroids, fatty acids, and xenobiotics. This is Cytochrome P450 1A1 (cyp1a1) from Sparus aurata (Gilthead sea bream).